The chain runs to 230 residues: UPF0173 metal-dependent hydrolase Sca_1312 (230 aa).

It belongs to the UPF0173 family.

The polypeptide is UPF0173 metal-dependent hydrolase Sca_1312 (Staphylococcus carnosus (strain TM300)).